Consider the following 55-residue polypeptide: Large ribosomal subunit protein bL32 (55 aa).

A compositionally biased stretch (basic residues) spans 1–19 (MAVPKRRMSRANTHTRRSQ). Residues 1–21 (MAVPKRRMSRANTHTRRSQWK) form a disordered region.

Belongs to the bacterial ribosomal protein bL32 family.

The chain is Large ribosomal subunit protein bL32 from Corynebacterium kroppenstedtii (strain DSM 44385 / JCM 11950 / CIP 105744 / CCUG 35717).